A 176-amino-acid chain; its full sequence is Cytochrome c oxidase subunit 4 isoform 2, mitochondrial (176 aa).

Residues 1–28 (MLRLTAGRVRSLLAGRATAAFSTSSARM) constitute a mitochondrion transit peptide. The Mitochondrial matrix segment spans residues 29 to 106 (ASHDLEVAES…TYSEMKQPSS (78 aa)). The chain crosses the membrane as a helical span at residues 107 to 132 (EWKTVFGGIFIFLGFTGLVVWWQALY). Topologically, residues 133 to 176 (VYPPRPRTFDDEWKAKQLKRMLDMRVNPIEGFSAKWDYEKGQWK) are mitochondrial intermembrane.

It belongs to the cytochrome c oxidase IV family. In terms of assembly, component of the cytochrome c oxidase (complex IV, CIV), a multisubunit enzyme composed of 14 subunits. The complex is composed of a catalytic core of 3 subunits MT-CO1, MT-CO2 and MT-CO3, encoded in the mitochondrial DNA, and 11 supernumerary subunits COX4I, COX5A, COX5B, COX6A, COX6B, COX6C, COX7A, COX7B, COX7C, COX8 and NDUFA4, which are encoded in the nuclear genome. The complex exists as a monomer or a dimer and forms supercomplexes (SCs) in the inner mitochondrial membrane with NADH-ubiquinone oxidoreductase (complex I, CI) and ubiquinol-cytochrome c oxidoreductase (cytochrome b-c1 complex, complex III, CIII), resulting in different assemblies (supercomplex SCI(1)III(2)IV(1) and megacomplex MCI(2)III(2)IV(2)).

The protein localises to the mitochondrion inner membrane. The protein operates within energy metabolism; oxidative phosphorylation. Component of the cytochrome c oxidase, the last enzyme in the mitochondrial electron transport chain which drives oxidative phosphorylation. The respiratory chain contains 3 multisubunit complexes succinate dehydrogenase (complex II, CII), ubiquinol-cytochrome c oxidoreductase (cytochrome b-c1 complex, complex III, CIII) and cytochrome c oxidase (complex IV, CIV), that cooperate to transfer electrons derived from NADH and succinate to molecular oxygen, creating an electrochemical gradient over the inner membrane that drives transmembrane transport and the ATP synthase. Cytochrome c oxidase is the component of the respiratory chain that catalyzes the reduction of oxygen to water. Electrons originating from reduced cytochrome c in the intermembrane space (IMS) are transferred via the dinuclear copper A center (CU(A)) of subunit 2 and heme A of subunit 1 to the active site in subunit 1, a binuclear center (BNC) formed by heme A3 and copper B (CU(B)). The BNC reduces molecular oxygen to 2 water molecules using 4 electrons from cytochrome c in the IMS and 4 protons from the mitochondrial matrix. This Thunnus obesus (Bigeye tuna) protein is Cytochrome c oxidase subunit 4 isoform 2, mitochondrial.